The sequence spans 158 residues: NAD(P)H-quinone oxidoreductase subunit N (158 aa).

It belongs to the complex I NdhN subunit family. NDH-1 can be composed of about 15 different subunits; different subcomplexes with different compositions have been identified which probably have different functions.

The protein resides in the cellular thylakoid membrane. The catalysed reaction is a plastoquinone + NADH + (n+1) H(+)(in) = a plastoquinol + NAD(+) + n H(+)(out). It carries out the reaction a plastoquinone + NADPH + (n+1) H(+)(in) = a plastoquinol + NADP(+) + n H(+)(out). Its function is as follows. NDH-1 shuttles electrons from an unknown electron donor, via FMN and iron-sulfur (Fe-S) centers, to quinones in the respiratory and/or the photosynthetic chain. The immediate electron acceptor for the enzyme in this species is believed to be plastoquinone. Couples the redox reaction to proton translocation, and thus conserves the redox energy in a proton gradient. Cyanobacterial NDH-1 also plays a role in inorganic carbon-concentration. The sequence is that of NAD(P)H-quinone oxidoreductase subunit N from Synechococcus elongatus (strain ATCC 33912 / PCC 7942 / FACHB-805) (Anacystis nidulans R2).